Consider the following 3564-residue polypeptide: Sushi, von Willebrand factor type A, EGF and pentraxin domain-containing protein 1 (3564 aa).

The signal sequence occupies residues 1-17; the sequence is MWTRLAFCCWALALVSG. The 182-residue stretch at 84–265 folds into the VWFA domain; it reads ELVFLVDESS…LARRALHEDL (182 aa). N-linked (GlcNAc...) asparagine glycosylation is present at Asn187. 3 consecutive Sushi domains span residues 377–436, 437–496, and 497–561; these read VHCP…FCRV, RTCP…RCVE, and RHCA…VCKD. Disulfide bonds link Cys379–Cys421, Cys407–Cys434, Cys439–Cys481, Cys467–Cys494, Cys499–Cys544, and Cys530–Cys559. HYR domains lie at 560-644 and 645-724; these read KDVE…KVID and VEPP…VIKG. A Sushi 4 domain is found at 725–789; sequence SPCEVPFTPV…YSTEWPDCAI (65 aa). 20 disulfide bridges follow: Cys727/Cys769, Cys753/Cys787, Cys1192/Cys1203, Cys1197/Cys1212, Cys1214/Cys1223, Cys1230/Cys1241, Cys1235/Cys1250, Cys1252/Cys1261, Cys1268/Cys1279, Cys1273/Cys1288, Cys1290/Cys1299, Cys1306/Cys1317, Cys1311/Cys1326, Cys1328/Cys1337, Cys1344/Cys1355, Cys1349/Cys1364, Cys1366/Cys1375, Cys1382/Cys1393, Cys1387/Cys1402, and Cys1404/Cys1413. The EGF-like 1 domain maps to 1188 to 1224; sequence VFHECFLNPCHNSGTCQQLGRGYVCLCPPGYTGLKCE. The region spanning 1226–1262 is the EGF-like 2; calcium-binding domain; sequence DIDECSSLPCLNGGICRDKVGGFTCECSSGYTGQICE. Residues 1264–1300 enclose the EGF-like 3; calcium-binding domain; it reads NINECSSSPCLNKGTCTDGLASYRCTCVSGYVGVHCE. Positions 1302–1338 constitute an EGF-like 4; calcium-binding domain; sequence DVNECQSSPCLNNAVCKDQVGGFSCKCPPGFLGTRCE. The EGF-like 5; calcium-binding domain occupies 1340–1376; sequence NVDECLSQPCQNGATCKDGANSFRCQCPAGFTGPHCE. The region spanning 1378-1414 is the EGF-like 6; calcium-binding domain; that stretch reads NINECQSNPCRNQATCVDELNSYSCKCRPGFSGRRCE. The Pentraxin (PTX) domain occupies 1419–1623; sequence SGFNLDFEVS…VKVDSSSIFC (205 aa). Sushi domains are found at residues 1624 to 1682 and 1683 to 1740; these read SDCP…HCER and IRCG…SCLD. Intrachain disulfides connect Cys1626–Cys1667, Cys1653–Cys1680, Cys1685–Cys1725, Cys1711–Cys1738, Cys1744–Cys1756, Cys1750–Cys1765, Cys1767–Cys1778, Cys1784–Cys1824, Cys1810–Cys1837, Cys1842–Cys1882, Cys1868–Cys1895, Cys1900–Cys1940, Cys1926–Cys1953, Cys1958–Cys1998, Cys1984–Cys2011, Cys2016–Cys2056, Cys2042–Cys2073, Cys2078–Cys2121, Cys2107–Cys2136, Cys2141–Cys2181, Cys2167–Cys2194, Cys2199–Cys2240, Cys2226–Cys2254, Cys2259–Cys2299, Cys2285–Cys2313, Cys2318–Cys2358, Cys2344–Cys2371, Cys2376–Cys2417, Cys2403–Cys2430, Cys2435–Cys2475, Cys2461–Cys2488, Cys2493–Cys2533, Cys2519–Cys2546, Cys2551–Cys2591, and Cys2577–Cys2603. The EGF-like 7; calcium-binding domain occupies 1740–1779; the sequence is DVDECAVGSDCSEHASCLNTNGSYICSCKPPYTGDGKNCA. Asn1760 is a glycosylation site (N-linked (GlcNAc...) asparagine). Sushi domains follow at residues 1776–1839, 1840–1897, 1898–1955, 1956–2013, 2014–2075, 2076–2138, 2139–2196, 2197–2256, 2257–2315, 2316–2373, 2374–2432, 2433–2490, 2491–2548, and 2549–2605; these read KNCA…SCEA, ISCG…VCEL, VKCS…SCQL, VSCG…QCLA, VSCD…RCIA, HFCE…QCIP, VRCG…TCHP, VSCN…SCTP, LNCG…KCVP, TKCA…VCKL, VLCQ…ECVP, VECP…MCRP, IECP…SCNA, and IHCS…TCVP. The tract at residues 2634 to 2641 is important for the interaction with integrin ITGA9:ITGB1; the sequence is DMMEVPYL. Sushi domains follow at residues 2659-2708, 2709-2766, 2767-2824, 2825-2882, 2883-2940, 2941-2998, 2999-3054, 3055-3112, 3113-3171, 3172-3231, 3232-3289, 3290-3347, 3348-3406, and 3407-3463; these read EESL…SCIS, IECD…RCEV, ISCS…VCLP, VDCG…SCVP, VRCP…ICKP, ATCG…SCLP, CTCS…LCEH, ADCG…TCEP, VSCG…NCSP, KTCP…SCIP, VVCG…VCRE, SRCE…LCKP, NPCP…RCEK, and ISCG…ICRA. Intrachain disulfides connect Cys2679/Cys2706, Cys2711/Cys2751, Cys2737/Cys2764, Cys2769/Cys2809, Cys2795/Cys2822, Cys2827/Cys2867, Cys2853/Cys2880, Cys2885/Cys2925, Cys2911/Cys2938, Cys2943/Cys2983, Cys2969/Cys2996, Cys3001/Cys3040, Cys3026/Cys3052, Cys3057/Cys3097, Cys3083/Cys3110, Cys3115/Cys3156, Cys3141/Cys3169, Cys3174/Cys3214, Cys3200/Cys3229, Cys3234/Cys3274, Cys3260/Cys3287, Cys3292/Cys3332, Cys3318/Cys3345, Cys3350/Cys3391, Cys3377/Cys3404, Cys3409/Cys3449, Cys3435/Cys3461, Cys3497/Cys3507, Cys3501/Cys3513, Cys3515/Cys3524, Cys3529/Cys3539, Cys3533/Cys3545, and Cys3547/Cys3556. 2 EGF-like domains span residues 3493–3525 and 3526–3557; these read EEPICILPCLNGGRCVAPYRCDCPAGWTGSRCH and TATCQSPCLNGGKCVRPNRCHCLSSWTGHDCS.

Interacts (via Sushi domain 21) with ITGA9:ITGB1; thereby inhibits Ca(2+) intracellular signaling and as a result represses vasocontraction. Interacts (via Sushi domain 21) with ITGA4:ITGB1; thereby inhibits Ca(2+) intracellular signaling and as a result represses vasocontraction. Interacts with ANGPT1 and ANGPT2. Interacts with PEAR1 (via extracellular domain). Interacts with HSPG2, TLN1, FN1, COPA, CCT2, IQGAP1, LAMC1 and NID1. Interacts (via C-terminus) with TIE1.

It is found in the secreted. The protein resides in the nucleus. The protein localises to the cytoplasm. Its subcellular location is the membrane. In terms of biological role, required for morphological development, cell alignment and migration of lymphatic endothelial cells during embryonic development, potentially via modulation of ANGPT2-TIE1 signaling and subsequent activation of FOXC2 transcription. Required for embryonic lymphatic vascular development, via mediating the correct formation of the first lymphovenous contact site and tight association of the lymphatic endothelium with the venous endothelium. Represses PRKCA-mediated L-type voltage-gated channel Ca(2+) influx and ROCK-mediated calcium sensitivity in vascular smooth muscle cells, via its interaction with integrins, thereby inhibiting vasocontraction. Promotes platelet activation, via its interaction with PEAR1 and subsequent activation of AKT/mTOR signaling. Plays a role in epidermal development and keratinocyte differentiation, independent of cell-cell adhesion. May play a role in initial cell attachment of stromal osteogenic cells. May promote myoblast cell adhesion when in the presence of integrin ITGA9:ITGB1. This is Sushi, von Willebrand factor type A, EGF and pentraxin domain-containing protein 1 (Svep1) from Rattus norvegicus (Rat).